Here is a 212-residue protein sequence, read N- to C-terminus: Thymidylate kinase (212 aa).

9–16 (GIDGCGKT) contacts ATP.

This sequence belongs to the thymidylate kinase family.

It carries out the reaction dTMP + ATP = dTDP + ADP. Phosphorylation of dTMP to form dTDP in both de novo and salvage pathways of dTTP synthesis. The polypeptide is Thymidylate kinase (Synechococcus sp. (strain CC9311)).